The chain runs to 240 residues: Regulatory protein RecX (240 aa).

It belongs to the RecX family.

Its subcellular location is the cytoplasm. Functionally, modulates RecA activity. The protein is Regulatory protein RecX of Lacticaseibacillus paracasei (strain ATCC 334 / BCRC 17002 / CCUG 31169 / CIP 107868 / KCTC 3260 / NRRL B-441) (Lactobacillus paracasei).